Here is a 397-residue protein sequence, read N- to C-terminus: Potassium channel subfamily K member 4 (397 aa).

The Cytoplasmic portion of the chain corresponds to 1–3; that stretch reads MRS. The helical transmembrane segment at 4 to 24 threads the bilayer; it reads TTLLALLALVLLYLVSGALVF. Topologically, residues 25–88 are extracellular; it reads QALEQPHEQQ…WTNSSNHSSA (64 aa). N-linked (GlcNAc...) asparagine glycosylation occurs at asparagine 81. Residues 89-103 constitute an intramembrane region (helical); that stretch reads WNLGSAFFFSGTIIT. K(+)-binding residues include threonine 104, isoleucine 105, glycine 106, and tyrosine 107. A selectivity filter 1 region spans residues 104–109; that stretch reads TIGYGN. Residues 104–110 lie within the membrane without spanning it; the sequence is TIGYGNI. Residues 111 to 118 are Extracellular-facing; it reads ALHTDAGR. Residues 119 to 151 traverse the membrane as a helical segment; that stretch reads LFCIFYALVGIPLFGMLLAGVGDRLGSSLRRGI. The Cytoplasmic portion of the chain corresponds to 152–173; it reads GHIEAVFLKWHVPPGLVRMLSA. The helical transmembrane segment at 174–195 threads the bilayer; it reads VLFLLIGCLLFVLTPTFVFSYM. Topologically, residues 196 to 200 are extracellular; it reads ESWSK. An intramembrane region (helical) is located at residues 201 to 214; that stretch reads LEAIYFVIVTLTTV. K(+)-binding residues include threonine 213, valine 214, glycine 215, and phenylalanine 216. The tract at residues 213-218 is selectivity filter 2; sequence TVGFGD. Residues 215–220 lie within the membrane without spanning it; the sequence is GFGDYV. The Extracellular portion of the chain corresponds to 221-234; the sequence is PGDGTGQNSPAYQP. The chain crosses the membrane as a helical span at residues 235–261; the sequence is LVWFWILFGLAYFASVLTTIGNWLRAV. The Cytoplasmic segment spans residues 262–397; it reads SRRTRAEMGG…GRLRDKAVPV (136 aa). Over residues 282–292 the composition is skewed to polar residues; the sequence is TVTARVTQRTG. The segment at 282 to 397 is disordered; sequence TVTARVTQRT…GRLRDKAVPV (116 aa). Over residues 369 to 388 the composition is skewed to basic residues; that stretch reads PRGRRRPNPTKKPSRPRGPG.

This sequence belongs to the two pore domain potassium channel (TC 1.A.1.8) family. As to quaternary structure, homodimer; disulfide-linked. Forms heterodimers with other 2-pore domain K(+) channel subunits, such as KCNK2 and KCNK10. In terms of tissue distribution, detected in brain, and at much lower levels in liver, skeletal muscle and testis.

Its subcellular location is the cell membrane. The protein resides in the cell projection. It localises to the axon. The enzyme catalyses K(+)(in) = K(+)(out). It carries out the reaction Rb(+)(in) = Rb(+)(out). It catalyses the reaction Cs(+)(in) = Cs(+)(out). With respect to regulation, activated by various stimuli including intracellular basic pH, mechanical stretch and heat and polyunsaturated fatty acids such as arachidonic acid. Functionally, k(+) channel that conducts voltage-dependent outward rectifying currents upon membrane depolarization. Voltage sensing is coupled to K(+) electrochemical gradient in an 'ion flux gating' mode where outward but not inward ion flow opens the gate. Converts to voltage-independent 'leak' conductance mode upon stimulation by various stimuli including mechanical membrane stretch, basic pH, heat and lipids. Homo- and heterodimerizes to form functional channels with distinct regulatory and gating properties. At trigeminal A-beta afferent nerves, the heterodimer of KCNK2/TREK-1 and KCNK4/TRAAK is mostly coexpressed at nodes of Ranvier where it conducts voltage-independent mechanosensitive and thermosensitive currents, allowing rapid action potential repolarization, high speed and high frequence saltatory conduction on myelinated nerves to ensure prompt sensory responses. Permeable to other monovalent cations such as Rb(+) and Cs(+). In Rattus norvegicus (Rat), this protein is Potassium channel subfamily K member 4.